Here is an 817-residue protein sequence, read N- to C-terminus: Protein kintoun (817 aa).

Disordered regions lie at residues 233-259 (AEST…PRCS), 385-404 (AGAR…RKSC), 410-445 (AGTA…TPEN), and 473-503 (VQTS…KPLC). A compositionally biased stretch (basic and acidic residues) spans 386–401 (GAREESADSSGADHGR). Phosphoserine occurs at positions 622 and 631. The segment at 653-692 (ECSDPDGLQGKEKGVKEECPLSEKENTEHSTTSTADSNSS) is disordered. The segment covering 661-680 (QGKEKGVKEECPLSEKENTE) has biased composition (basic and acidic residues). Polar residues predominate over residues 681–692 (HSTTSTADSNSS).

This sequence belongs to the PIH1 family. Kintoun subfamily. In terms of assembly, interacts with CFAP300. Interacts with DNAI2 and HSPA1A. Interacts with DNAAF4. Interacts with DNAAF6/PIH1D3.

Its subcellular location is the cytoplasm. The protein localises to the dynein axonemal particle. In terms of biological role, required for cytoplasmic pre-assembly of axonemal dyneins, thereby playing a central role in motility in cilia and flagella. Involved in pre-assembly of dynein arm complexes in the cytoplasm before intraflagellar transport loads them for the ciliary compartment. This Rattus norvegicus (Rat) protein is Protein kintoun.